We begin with the raw amino-acid sequence, 88 residues long: Putative septation protein SpoVG (88 aa).

This sequence belongs to the SpoVG family.

In terms of biological role, could be involved in septation. In Desulforudis audaxviator (strain MP104C), this protein is Putative septation protein SpoVG.